The primary structure comprises 969 residues: Leucine--tRNA ligase (969 aa).

Positions 46–56 (PYLNGVLHAGH) match the 'HIGH' region motif. Positions 658-662 (KLSKS) match the 'KMSKS' region motif. An ATP-binding site is contributed by lysine 661.

Belongs to the class-I aminoacyl-tRNA synthetase family.

It is found in the cytoplasm. It catalyses the reaction tRNA(Leu) + L-leucine + ATP = L-leucyl-tRNA(Leu) + AMP + diphosphate. The protein is Leucine--tRNA ligase of Methanococcus aeolicus (strain ATCC BAA-1280 / DSM 17508 / OCM 812 / Nankai-3).